We begin with the raw amino-acid sequence, 825 residues long: Osmosensitive cation channel TMEM63C (825 aa).

The Extracellular segment spans residues 1–50 (MAFESWPAGGVRPVEELDVRSFLMEENSTAERCYRSHSRSSVLQGLPFGG). Residues 51-75 (VPTVLAINVVLWLILLLIFSCLRKA) form a helical membrane-spanning segment. The Cytoplasmic portion of the chain corresponds to 76–141 (AWDYGRLALL…KDEEIRSKCG (66 aa)). Residues 98-117 (EQSEKEKTPSDSSPSDSETK) are disordered. A helical transmembrane segment spans residues 142–174 (IDAVTYLSFQRHIILLMMVVCLLSLTIILPVNL). Topologically, residues 175 to 198 (SGNLLGDNPENFGRTTVVNVPAQN) are extracellular. Residues 199 to 223 (IFLWLHSIFALLYFVITVLCMAHHS) traverse the membrane as a helical segment. Topologically, residues 224 to 418 (SRLEYREDEK…IIWENLSVCG (195 aa)) are cytoplasmic. A helical transmembrane segment spans residues 419-448 (PRWWLRCILLNILLFLLLFFLTTPAIIVNT). The Extracellular segment spans residues 449-463 (MDKFNVTRPVESLRN). Residues 464–493 (PVITQFFPTLLLWAFSILLPFIVYYSSFFE) form a helical membrane-spanning segment. Residues 494–497 (YHWT) lie on the Cytoplasmic side of the membrane. Residues 498-534 (RSGENQVTMHKCFLLLVFMVIILPSLGLSSLNLFFRW) traverse the membrane as a helical segment. Over 535 to 557 (LFDVRFLDETDVKFQCVFLPDNG) the chain is Extracellular. A helical transmembrane segment spans residues 558-590 (AFFVNYVITSSLIGTAMELLRIPALLVYSLRLC). Residues 591-610 (FAKSKAECIHVKISQAYEFQ) lie on the Cytoplasmic side of the membrane. A helical membrane pass occupies residues 611–629 (FGLEYAWTMCIFSVSMTYS). Residues 630-632 (ITC) are Extracellular-facing. The helical transmembrane segment at 633 to 657 (PVIVPFGLLYLVLKHMVDRYNIYYA) threads the bilayer. Residues 658–664 (YTPTKLN) are Cytoplasmic-facing. Residues 665 to 693 (QRIHAAAISQVVVAPILCMFWLLFFSVLR) traverse the membrane as a helical segment. The Extracellular portion of the chain corresponds to 694 to 698 (LGPVQ). The helical transmembrane segment at 699–719 (PITLFTFITLLCSIAFSCFGF) threads the bilayer. Residues 720-825 (CMKKLRADRS…LLMDSPVAFQ (106 aa)) are Cytoplasmic-facing. The disordered stretch occupies residues 777–825 (SPAHQSYGTMVNSQSSVRDAEEDEEKDLEETLETELKDDLLMDSPVAFQ). A compositionally biased stretch (polar residues) spans 779 to 793 (AHQSYGTMVNSQSSV). A compositionally biased stretch (acidic residues) spans 796 to 809 (AEEDEEKDLEETLE).

This sequence belongs to the CSC1 (TC 1.A.17) family. In terms of assembly, monomer.

The protein resides in the endoplasmic reticulum membrane. It is found in the cell membrane. The enzyme catalyses Ca(2+)(in) = Ca(2+)(out). In terms of biological role, acts as an osmosensitive cation channel preferentially activated upon hypotonic stress. In contrast to tmem63b, does not show phospholipid scramblase activity. Required for the functional integrity of the kidney glomerular filtration barrier. The polypeptide is Osmosensitive cation channel TMEM63C (tmem63c) (Danio rerio (Zebrafish)).